We begin with the raw amino-acid sequence, 147 residues long: D-aminoacyl-tRNA deacylase (147 aa).

The short motif at 136–137 is the Gly-cisPro motif, important for rejection of L-amino acids element; it reads GP.

Belongs to the DTD family. In terms of assembly, homodimer.

The protein localises to the cytoplasm. It catalyses the reaction glycyl-tRNA(Ala) + H2O = tRNA(Ala) + glycine + H(+). It carries out the reaction a D-aminoacyl-tRNA + H2O = a tRNA + a D-alpha-amino acid + H(+). Functionally, an aminoacyl-tRNA editing enzyme that deacylates mischarged D-aminoacyl-tRNAs. Also deacylates mischarged glycyl-tRNA(Ala), protecting cells against glycine mischarging by AlaRS. Acts via tRNA-based rather than protein-based catalysis; rejects L-amino acids rather than detecting D-amino acids in the active site. By recycling D-aminoacyl-tRNA to D-amino acids and free tRNA molecules, this enzyme counteracts the toxicity associated with the formation of D-aminoacyl-tRNA entities in vivo and helps enforce protein L-homochirality. This Streptococcus agalactiae serotype III (strain NEM316) protein is D-aminoacyl-tRNA deacylase.